A 366-amino-acid polypeptide reads, in one-letter code: Ribosomal RNA large subunit methyltransferase M (366 aa).

Residues serine 188, 221–224, aspartate 240, aspartate 260, and aspartate 277 contribute to the S-adenosyl-L-methionine site; that span reads CPGG. Residue lysine 306 is the Proton acceptor of the active site.

This sequence belongs to the class I-like SAM-binding methyltransferase superfamily. RNA methyltransferase RlmE family. RlmM subfamily. In terms of assembly, monomer.

The protein resides in the cytoplasm. It catalyses the reaction cytidine(2498) in 23S rRNA + S-adenosyl-L-methionine = 2'-O-methylcytidine(2498) in 23S rRNA + S-adenosyl-L-homocysteine + H(+). Functionally, catalyzes the 2'-O-methylation at nucleotide C2498 in 23S rRNA. The sequence is that of Ribosomal RNA large subunit methyltransferase M from Salmonella newport (strain SL254).